Consider the following 218-residue polypeptide: Putative pre-16S rRNA nuclease (218 aa).

It belongs to the YqgF nuclease family.

The protein localises to the cytoplasm. Could be a nuclease involved in processing of the 5'-end of pre-16S rRNA. This Thermotoga maritima (strain ATCC 43589 / DSM 3109 / JCM 10099 / NBRC 100826 / MSB8) protein is Putative pre-16S rRNA nuclease.